The primary structure comprises 1770 residues: AF4/FMR2 family member lilli (1770 aa).

Composition is skewed to low complexity over residues 1–19 (MAQQ…HPHQ), 154–204 (LGHS…YLKQ), and 227–269 (PSSS…GTTP). Disordered stretches follow at residues 1-28 (MAQQ…NQLQ), 134-327 (SRHA…EKDI), 402-660 (TSLL…PGNV), 761-805 (LHSA…LQLP), 822-1173 (MQKA…KQGQ), and 1291-1390 (KHEH…QISK). The span at 402–414 (TSLLTTPPHASQG) shows a compositional bias: polar residues. Residues 434-447 (KAAAALSPTAAAKP) show a composition bias toward low complexity. Residues 448–461 (LKTEKNHTLEKQDS) show a composition bias toward basic and acidic residues. Residues 463-474 (LENDLELSESED) show a composition bias toward acidic residues. Phosphoserine is present on residues Ser470 and Ser472. The span at 483 to 503 (SAGNSSNSSESDSSESGSESS) shows a compositional bias: low complexity. The segment covering 511 to 520 (QHHHHNHHHQ) has biased composition (basic residues). The span at 521-552 (QQQQQLQQQQQQQLLQQKQQHQQILQQQQRQL) shows a compositional bias: low complexity. Over residues 582-614 (FGSGGAGNGGCSTASSGGGGGGSGSGGGSGSSS) the composition is skewed to gly residues. Residues 615 to 625 (GIGTMSSGSSS) show a composition bias toward low complexity. Polar residues-rich tracts occupy residues 626 to 638 (NKTP…NKWT) and 647 to 659 (ANQT…SPGN). Residues 768 to 800 (SDSGTSGSGSTSSSSSSSDSAPGEVVPMPGPGE) show a composition bias toward low complexity. Basic residues predominate over residues 844 to 854 (QRQKKPRKKKP). A phosphoserine mark is found at Ser863 and Ser864. 5 stretches are compositionally biased toward low complexity: residues 880-893 (AAAA…ATAT), 909-928 (QQQS…SSSQ), 994-1028 (ANAS…SSSS), 1071-1081 (SGSSSPSSSSS), and 1111-1131 (SQHS…SSTS). Residues 900-912 (KKGRGRPRKQQQS) constitute a DNA-binding region (a.T hook). Phosphoserine is present on residues Ser920 and Ser922. Composition is skewed to basic and acidic residues over residues 1295-1312 (PHPV…ESKF) and 1321-1355 (FQLK…EREQ). A Phosphoserine modification is found at Ser1442. Low complexity-rich tracts occupy residues 1483–1499 (AAAT…TSTA) and 1656–1676 (GNTP…SGSN). Disordered regions lie at residues 1483-1502 (AAAT…APPA) and 1656-1683 (GNTP…GKIV).

It belongs to the AF4 family.

It localises to the nucleus. In terms of biological role, has a role in transcriptional regulation. Acts in parallel with the Ras/MAPK and the PI3K/PKB pathways in the control of cell identity and cellular growth. Essential for regulation of the cytoskeleton and cell growth but not for cell proliferation or growth rate. Required specifically for the microtubule-based basal transport of lipid droplets. Plays a partially redundant function downstream of Raf in cell fate specification in the developing eye. Pair-rule protein that regulates embryonic cellularization, gastrulation and segmentation. In Drosophila pseudoobscura pseudoobscura (Fruit fly), this protein is AF4/FMR2 family member lilli.